The following is a 375-amino-acid chain: 23S rRNA (uracil(747)-C(5))-methyltransferase RlmC (375 aa).

[4Fe-4S] cluster contacts are provided by Cys-3, Cys-11, Cys-14, and Cys-87. Residues Gln-212, Phe-241, Glu-262, and Asn-307 each contribute to the S-adenosyl-L-methionine site. The Nucleophile role is filled by Cys-334.

The protein belongs to the class I-like SAM-binding methyltransferase superfamily. RNA M5U methyltransferase family. RlmC subfamily.

The catalysed reaction is uridine(747) in 23S rRNA + S-adenosyl-L-methionine = 5-methyluridine(747) in 23S rRNA + S-adenosyl-L-homocysteine + H(+). In terms of biological role, catalyzes the formation of 5-methyl-uridine at position 747 (m5U747) in 23S rRNA. The chain is 23S rRNA (uracil(747)-C(5))-methyltransferase RlmC from Escherichia coli O6:H1 (strain CFT073 / ATCC 700928 / UPEC).